Consider the following 252-residue polypeptide: Beta-carotene isomerase D27, chloroplastic (252 aa).

The transit peptide at 1 to 43 (MDSKMIAHNMSLTPTLAQWKKLRLKPKHTFVVGVLARPTDDIS) directs the protein to the chloroplast.

It depends on Fe cation as a cofactor. As to expression, highly expressed in roots. Expressed at low levels in leaves and stems.

The protein localises to the plastid. Its subcellular location is the chloroplast. It carries out the reaction all-trans-beta-carotene = 9-cis-beta-carotene. Functionally, involved in strigolactones biosynthesis by catalyzing the isomerization of the C9-C10 double bond in all-trans-beta-carotene leading to 9-cis-beta-carotene and providing the substrate for CCD7. Strigolactones are hormones that inhibit tillering and shoot branching through the MAX-dependent pathway, contribute to the regulation of shoot architectural response to phosphate-limiting conditions and function as rhizosphere signals that stimulate hyphal branching of arbuscular mycorrhizal fungi and trigger seed germination of root parasitic weeds. The chain is Beta-carotene isomerase D27, chloroplastic from Medicago truncatula (Barrel medic).